Consider the following 100-residue polypeptide: Integration host factor subunit beta (100 aa).

It belongs to the bacterial histone-like protein family. In terms of assembly, heterodimer of an alpha and a beta chain.

In terms of biological role, this protein is one of the two subunits of integration host factor, a specific DNA-binding protein that functions in genetic recombination as well as in transcriptional and translational control. The chain is Integration host factor subunit beta from Agrobacterium fabrum (strain C58 / ATCC 33970) (Agrobacterium tumefaciens (strain C58)).